The sequence spans 35 residues: Small toxic polypeptide LdrA (35 aa).

A helical membrane pass occupies residues 8-28 (MIFWHDLAAPILAGIITAAIV).

It belongs to the Ldr toxic peptide family.

It is found in the cell inner membrane. Functionally, toxic component of a type I toxin-antitoxin (TA) system. Inhibits ATP synthesis possibly due to its insertion in the cell inner membrane, ATP levels drop over 50% 2 minutes after induction. Overexpression is toxic leading to cell death, it inhibits cell growth within 30 minutes; C-terminally tagged versions of the protein are toxic while N-terminally tagged versions are not. The protein is Small toxic polypeptide LdrA (ldrA) of Escherichia coli (strain K12).